The chain runs to 964 residues: Translation initiation factor IF-2 (964 aa).

The disordered stretch occupies residues 49–357 (QIGSAEPADD…QEFDEMQAPL (309 aa)). A compositionally biased stretch (low complexity) spans 62 to 85 (AKPAARKSQTSSKKTSKETTTAKP). A compositionally biased stretch (pro residues) spans 86 to 102 (APGPKPGPGPKPTPGPR). The span at 103–117 (PGSSSGPKPGRSSAA) shows a compositional bias: low complexity. The segment covering 159–169 (PHAPAPKPKPG) has biased composition (pro residues). 2 stretches are compositionally biased toward low complexity: residues 190–212 (GLPSAARPGPRPGAGRRTGAPRP) and 242–251 (GQGERMPRPG). Composition is skewed to gly residues over residues 252–261 (GSQGSRGGSG) and 284–334 (GRGG…GRGG). The segment covering 335-346 (GGRRGRKSRKQR) has biased composition (basic residues). The 172-residue stretch at 458-629 (ARPPVVTVMG…AIVLTADAAL (172 aa)) folds into the tr-type G domain. The segment at 467-474 (GHVDHGKT) is G1. Residue 467-474 (GHVDHGKT) coordinates GTP. Residues 492 to 496 (GITQA) form a G2 region. Positions 517 to 520 (DTPG) are G3. Residues 517–521 (DTPGH) and 571–574 (NKID) contribute to the GTP site. Positions 571–574 (NKID) are G4. The G5 stretch occupies residues 607–609 (SAR).

This sequence belongs to the TRAFAC class translation factor GTPase superfamily. Classic translation factor GTPase family. IF-2 subfamily.

It localises to the cytoplasm. Its function is as follows. One of the essential components for the initiation of protein synthesis. Protects formylmethionyl-tRNA from spontaneous hydrolysis and promotes its binding to the 30S ribosomal subunits. Also involved in the hydrolysis of GTP during the formation of the 70S ribosomal complex. In Cutibacterium acnes (strain DSM 16379 / KPA171202) (Propionibacterium acnes), this protein is Translation initiation factor IF-2.